The following is a 555-amino-acid chain: Glutamine--tRNA ligase (555 aa).

The 'HIGH' region signature appears at 34 to 44; sequence PEPNGYLHIGH. ATP is bound by residues 35-37 and 41-47; these read EPN and HIGHAKS. 2 residues coordinate L-glutamine: aspartate 67 and tyrosine 212. ATP is bound by residues threonine 231, 261-262, and 269-271; these read RL and MSK. A 'KMSKS' region motif is present at residues 268 to 272; it reads VMSKR.

It belongs to the class-I aminoacyl-tRNA synthetase family. As to quaternary structure, monomer.

The protein resides in the cytoplasm. It catalyses the reaction tRNA(Gln) + L-glutamine + ATP = L-glutaminyl-tRNA(Gln) + AMP + diphosphate. The chain is Glutamine--tRNA ligase from Cronobacter sakazakii (strain ATCC BAA-894) (Enterobacter sakazakii).